A 457-amino-acid chain; its full sequence is Guanine nucleotide-binding protein subunit alpha homolog (457 aa).

Positions 131-457 (RQVKLLLLGA…QRNLNALMLQ (327 aa)) constitute a G-alpha domain. The segment at 134 to 147 (KLLLLGAGESGKST) is G1 motif. Residues 139–146 (GAGESGKS), 274–280 (LHCRKAT), 299–303 (DVGGQ), 369–372 (NKTD), and Ala-429 each bind GTP. Mg(2+) is bound by residues Ser-146 and Thr-280. The segment at 272 to 280 (DILHCRKAT) is G2 motif. Positions 295–304 (FVFVDVGGQR) are G3 motif. Residues 365–372 (ILFLNKTD) are G4 motif. The interval 427 to 432 (TTAIDT) is G5 motif.

The protein belongs to the G-alpha family. G(12) subfamily. As to quaternary structure, g proteins are composed of 3 units; alpha, beta and gamma. The alpha chain contains the guanine nucleotide binding site. In terms of tissue distribution, in ovary, expressed in nurse cells and oocyte. In early embryos, distributed uniformly. At the extended germband stage, accumulates in the mesoderm.

It is found in the cytoplasm. In terms of biological role, may play a role in a signal transduction pathway used during gastrulation. Required specifically for the ventral furrow and posterior midgut invaginations, where it is necessary for coordinating cell shape changes. Its function is as follows. Guanine nucleotide-binding proteins (G proteins) are involved as modulators or transducers in various transmembrane signaling systems. In Drosophila melanogaster (Fruit fly), this protein is Guanine nucleotide-binding protein subunit alpha homolog (cta).